A 139-amino-acid polypeptide reads, in one-letter code: Probable disulfide formation protein C 1 (139 aa).

The helical transmembrane segment at 8–27 (EYALFTAWGASFIATLGSLY) threads the bilayer. Cys-37 and Cys-40 are disulfide-bonded. The next 2 membrane-spanning stretches (helical) occupy residues 42–61 (YQRIFMYPFVLWLGIAVVKK) and 68–85 (YSLPIASIGACISLYHYA). Residues Cys-99 and Cys-104 are joined by a disulfide bond. A helical membrane pass occupies residues 113–135 (GFVTIPFLALIGFITIAVCSFIV).

Belongs to the DsbB family. BdbC subfamily.

The protein resides in the cell membrane. In terms of biological role, required for disulfide bond formation in some proteins. This is Probable disulfide formation protein C 1 (bdbC1) from Bacillus cereus (strain ATCC 10987 / NRS 248).